Here is a 376-residue protein sequence, read N- to C-terminus: Proteasome-interacting protein CIC1 (376 aa).

Disordered regions lie at residues 1–29 and 356–376; these read MAKK…KKSS and RSSS…KAKS. The tract at residues 310–376 is required for interaction with CDC4; it reads ETHEDDMVTI…ESEAVKKAKS (67 aa). Basic and acidic residues predominate over residues 357-376; that stretch reads SSSELEKESSESEAVKKAKS.

In terms of assembly, interacts with CDC4, PRE4, PRE6, RPT1 and SCL1 as part of the fully assembled 26S proteasome. Interacts with pre-ribosomal particles constituent NOP7.

The protein localises to the nucleus. Its subcellular location is the nucleolus. An adapter protein that specifically links the 26S proteasome to its substrate CDC4 which is one of the substrate recognition subunits of the SCF E3 ubiquitin ligase complex. Required for turnover of cell cycle regulatory proteins CDC4 and GRR1. Required for synthesis and nuclear export of 60S ribosomal subunits. Required for vegetative growth. This Saccharomyces cerevisiae (strain ATCC 204508 / S288c) (Baker's yeast) protein is Proteasome-interacting protein CIC1 (CIC1).